Here is a 202-residue protein sequence, read N- to C-terminus: Securin (202 aa).

The residue at position 2 (alanine 2) is an N-acetylalanine. The disordered stretch occupies residues 35 to 90; sequence LDGRSQVSTPRFGKTFDAPPALPKATRKALGTVNRATEKSVKTKGPLKQKQPSFSA. The D-box motif lies at 61-64; it reads RKAL. Short sequence motifs (TEK-box) lie at residues 71-73 and 94-96; these read TEK. An SH3-binding motif is present at residues 163-173; the sequence is PPSPVKMPSPP. Serine 165 is modified (phosphoserine; by CDK1).

It belongs to the securin family. As to quaternary structure, interacts with RPS10 and DNAJA1. Interacts with the caspase-like ESPL1, and prevents its protease activity probably by covering its active site. Interacts with TP53 and blocks its activity probably by blocking its binding to DNA. Interacts with the Ku 70 kDa subunit of ds-DNA kinase. Interacts with PTTG1IP. In terms of processing, phosphorylated at Ser-165 by CDK1 during mitosis. Phosphorylated in vitro by ds-DNA kinase. Post-translationally, ubiquitinated through 'Lys-11' linkage of ubiquitin moieties by the anaphase promoting complex (APC) at the onset of anaphase, conducting to its degradation. 'Lys-11'-linked ubiquitination is mediated by the E2 ligase UBE2C/UBCH10. Expressed at low level in most tissues, except in adult testis, where it is highly expressed. Overexpressed in many patients suffering from pituitary adenomas, primary epithelial neoplasias, and esophageal cancer.

The protein localises to the cytoplasm. The protein resides in the nucleus. Its function is as follows. Regulatory protein, which plays a central role in chromosome stability, in the p53/TP53 pathway, and DNA repair. Probably acts by blocking the action of key proteins. During the mitosis, it blocks Separase/ESPL1 function, preventing the proteolysis of the cohesin complex and the subsequent segregation of the chromosomes. At the onset of anaphase, it is ubiquitinated, conducting to its destruction and to the liberation of ESPL1. Its function is however not limited to a blocking activity, since it is required to activate ESPL1. Negatively regulates the transcriptional activity and related apoptosis activity of TP53. The negative regulation of TP53 may explain the strong transforming capability of the protein when it is overexpressed. May also play a role in DNA repair via its interaction with Ku, possibly by connecting DNA damage-response pathways with sister chromatid separation. In Homo sapiens (Human), this protein is Securin (PTTG1).